Here is a 246-residue protein sequence, read N- to C-terminus: 3-deoxy-manno-octulosonate cytidylyltransferase (246 aa).

This sequence belongs to the KdsB family.

The protein resides in the cytoplasm. It carries out the reaction 3-deoxy-alpha-D-manno-oct-2-ulosonate + CTP = CMP-3-deoxy-beta-D-manno-octulosonate + diphosphate. The protein operates within nucleotide-sugar biosynthesis; CMP-3-deoxy-D-manno-octulosonate biosynthesis; CMP-3-deoxy-D-manno-octulosonate from 3-deoxy-D-manno-octulosonate and CTP: step 1/1. It functions in the pathway bacterial outer membrane biogenesis; lipopolysaccharide biosynthesis. Activates KDO (a required 8-carbon sugar) for incorporation into bacterial lipopolysaccharide in Gram-negative bacteria. This is 3-deoxy-manno-octulosonate cytidylyltransferase from Chloroherpeton thalassium (strain ATCC 35110 / GB-78).